Here is a 194-residue protein sequence, read N- to C-terminus: Peptidyl-tRNA hydrolase (194 aa).

Tyr-17 lines the tRNA pocket. Residue His-22 is the Proton acceptor of the active site. Phe-68, Asn-70, and Asn-116 together coordinate tRNA.

It belongs to the PTH family. As to quaternary structure, monomer.

The protein localises to the cytoplasm. The catalysed reaction is an N-acyl-L-alpha-aminoacyl-tRNA + H2O = an N-acyl-L-amino acid + a tRNA + H(+). Its function is as follows. Hydrolyzes ribosome-free peptidyl-tRNAs (with 1 or more amino acids incorporated), which drop off the ribosome during protein synthesis, or as a result of ribosome stalling. Functionally, catalyzes the release of premature peptidyl moieties from peptidyl-tRNA molecules trapped in stalled 50S ribosomal subunits, and thus maintains levels of free tRNAs and 50S ribosomes. The chain is Peptidyl-tRNA hydrolase from Shewanella woodyi (strain ATCC 51908 / MS32).